A 321-amino-acid chain; its full sequence is tRNA-dihydrouridine synthase B (321 aa).

FMN is bound by residues 16–18 and glutamine 70; that span reads PMA. Catalysis depends on cysteine 100, which acts as the Proton donor. FMN is bound by residues lysine 139, 200–202, and 224–225; these read NGD and GR.

Belongs to the Dus family. DusB subfamily. Requires FMN as cofactor.

It catalyses the reaction a 5,6-dihydrouridine in tRNA + NAD(+) = a uridine in tRNA + NADH + H(+). It carries out the reaction a 5,6-dihydrouridine in tRNA + NADP(+) = a uridine in tRNA + NADPH + H(+). Its function is as follows. Catalyzes the synthesis of 5,6-dihydrouridine (D), a modified base found in the D-loop of most tRNAs, via the reduction of the C5-C6 double bond in target uridines. In Escherichia coli O157:H7, this protein is tRNA-dihydrouridine synthase B.